Consider the following 137-residue polypeptide: Golgin subfamily A member 7 (137 aa).

Residues Cys-69 and Cys-72 are each lipidated (S-palmitoyl cysteine).

The protein belongs to the ERF4 family. Interacts with ZDHHC9.

The protein resides in the golgi apparatus membrane. Functionally, may be involved in protein transport from Golgi to cell surface. The ZDHHC9-GOLGA7 complex is a palmitoyltransferase specific for HRAS and NRAS. The chain is Golgin subfamily A member 7 (GOLGA7) from Gallus gallus (Chicken).